Reading from the N-terminus, the 606-residue chain is Glutamine--fructose-6-phosphate aminotransferase [isomerizing] (606 aa).

Residue Cys2 is the Nucleophile; for GATase activity of the active site. In terms of domain architecture, Glutamine amidotransferase type-2 spans 2-218 (CGIFGYLGQR…SGELAVLRIG (217 aa)). SIS domains lie at 278–424 (FAES…QRQE) and 455–596 (WRCR…VDRP). The active-site For Fru-6P isomerization activity is the Lys601.

In terms of assembly, homodimer.

It is found in the cytoplasm. The catalysed reaction is D-fructose 6-phosphate + L-glutamine = D-glucosamine 6-phosphate + L-glutamate. Its function is as follows. Catalyzes the first step in hexosamine metabolism, converting fructose-6P into glucosamine-6P using glutamine as a nitrogen source. This is Glutamine--fructose-6-phosphate aminotransferase [isomerizing] from Chlamydia muridarum (strain MoPn / Nigg).